The following is a 228-amino-acid chain: LexA repressor (228 aa).

A DNA-binding region (H-T-H motif) is located at residues 28 to 48; it reads IREIGEALDIRSTNGVNDHLK. Active-site for autocatalytic cleavage activity residues include Ser-146 and Lys-183.

Belongs to the peptidase S24 family. Homodimer.

The catalysed reaction is Hydrolysis of Ala-|-Gly bond in repressor LexA.. Its function is as follows. Represses a number of genes involved in the response to DNA damage (SOS response), including recA and lexA. In the presence of single-stranded DNA, RecA interacts with LexA causing an autocatalytic cleavage which disrupts the DNA-binding part of LexA, leading to derepression of the SOS regulon and eventually DNA repair. This is LexA repressor from Anaeromyxobacter dehalogenans (strain 2CP-1 / ATCC BAA-258).